The sequence spans 728 residues: U-box domain-containing protein 4 (728 aa).

One can recognise a U-box domain in the interval 296–370 (SVPKEFSCPI…SQWCGVYGLQ (75 aa)). 2 ARM repeats span residues 441-483 (GAIP…EQEG) and 526-568 (GAVE…ESCA).

The enzyme catalyses S-ubiquitinyl-[E2 ubiquitin-conjugating enzyme]-L-cysteine + [acceptor protein]-L-lysine = [E2 ubiquitin-conjugating enzyme]-L-cysteine + N(6)-ubiquitinyl-[acceptor protein]-L-lysine.. The protein operates within protein modification; protein ubiquitination. Its function is as follows. Possesses E3 ubiquitin-protein ligase in vitro. The protein is U-box domain-containing protein 4 (PUB4) of Oryza sativa subsp. japonica (Rice).